The following is a 130-amino-acid chain: Small ribosomal subunit protein uS9 (130 aa).

Residues Ser108–Arg130 are disordered.

The protein belongs to the universal ribosomal protein uS9 family.

The chain is Small ribosomal subunit protein uS9 from Solidesulfovibrio magneticus (strain ATCC 700980 / DSM 13731 / RS-1) (Desulfovibrio magneticus).